Here is a 101-residue protein sequence, read N- to C-terminus: Large ribosomal subunit protein bL27 (101 aa).

The tract at residues 1 to 21 is disordered; sequence MAHKKAGGSSRNGRDSRSKRL.

It belongs to the bacterial ribosomal protein bL27 family.

The polypeptide is Large ribosomal subunit protein bL27 (Buchnera aphidicola subsp. Cinara cedri (strain Cc)).